A 365-amino-acid chain; its full sequence is Eukaryotic translation initiation factor 3 subunit H (365 aa).

An MPN domain is found at 15–166 (ILLDSLVVMK…IRAWRLSTAA (152 aa)). The segment at 276–295 (KRQQENESRLARGDPPLPMD) is disordered. Positions 277–287 (RQQENESRLAR) are enriched in basic and acidic residues.

It belongs to the eIF-3 subunit H family. As to quaternary structure, component of the eukaryotic translation initiation factor 3 (eIF-3) complex.

It is found in the cytoplasm. Component of the eukaryotic translation initiation factor 3 (eIF-3) complex, which is involved in protein synthesis of a specialized repertoire of mRNAs and, together with other initiation factors, stimulates binding of mRNA and methionyl-tRNAi to the 40S ribosome. The eIF-3 complex specifically targets and initiates translation of a subset of mRNAs involved in cell proliferation. This chain is Eukaryotic translation initiation factor 3 subunit H, found in Caenorhabditis briggsae.